A 133-amino-acid polypeptide reads, in one-letter code: Small ribosomal subunit protein uS9 (133 aa).

The disordered stretch occupies residues 97-133 (MKQELKSQGFLTRDPRKKERKKYGRKKARKSFQFSKR). The segment covering 114–133 (KERKKYGRKKARKSFQFSKR) has biased composition (basic residues).

Belongs to the universal ribosomal protein uS9 family.

This chain is Small ribosomal subunit protein uS9 (rpsI), found in Chlamydia muridarum (strain MoPn / Nigg).